The chain runs to 299 residues: Putative arsenical pump-driving ATPase 2 (299 aa).

8 to 15 (GKGGVGKT) serves as a coordination point for ATP.

This sequence belongs to the arsA ATPase family.

It carries out the reaction arsenite(in) + ATP + H2O = arsenite(out) + ADP + phosphate + H(+). Anion-transporting ATPase. Catalyzes the extrusion of arsenite. This is Putative arsenical pump-driving ATPase 2 (arsA2) from Aquifex aeolicus (strain VF5).